The primary structure comprises 200 residues: MGGKWSKSSIVGWPAIRERIRAAEGVGAVSQDLDKRGAITNSNTGATNADLAWLEAQEEEVGFPVRPQVPLRPMTYKAALDLSHFLKEKGGLEGLIYSRKRQEILDLWVYHTQGYFPDWQNYTPGPGPRFPLTFGWCFKLVPVDPEEVEKANEGENNCLLHPMSLHGMEDDDKEVLKWQFDSRLALRHIARERHPEYYKD.

Residue Gly-2 is the site of N-myristoyl glycine; by host attachment. Ser-6 carries the phosphoserine; by host modification. The interval 58 to 60 (EEE) is acidic; interacts with host PACS1 and PACS2; stabilizes the interaction of NEF/MHC-I with host AP1M1; necessary for MHC-I internalization. The SH3-binding; interaction with Src family tyrosine kinases stretch occupies residues 64-73 (PVRPQVPLRP). The PxxP; stabilizes the interaction of NEF/MHC-I with host AP1M1; necessary for MHC-I internalization motif lies at 67 to 70 (PQVP). Residues 103 to 119 (EILDLWVYHTQGYFPDW) are mediates dimerization, Nef-PTE1 interaction. Positions 143 to 175 (VDPEEVEKANEGENNCLLHPMSLHGMEDDDKEV) are binding to ATP6V1H. The Dileucine internalization motif; necessary for CD4 internalization motif lies at 159–160 (LL). The Diacidic; necessary for CD4 internalization signature appears at 169–170 (ED).

This sequence belongs to the lentivirus primate group Nef protein family. As to quaternary structure, monomer; cytosolic form. Homodimer; membrane bound form. Interacts with Nef associated p21-activated kinase (PAK2); this interaction activates PAK2. Associates with the Nef-MHC-I-AP1 complex; this complex is required for MHC-I internalization. Interacts (via C-terminus) with host PI3-kinase. Interacts with host PACS1; this interaction seems to be weak. Interacts with host PACS2. Interacts with host LCK and MAPK3; these interactions inhibit the kinase activity of the latter. Interacts with host ATP6V1H; this interaction may play a role in CD4 endocytosis. Associates with the CD4-Nef-AP2 complex; this complex is required for CD4 internalization. Interacts with host AP2 subunit alpha and AP2 subunit sigma2. Interacts with TCR-zeta chain; this interaction up-regulates the Fas ligand (FasL) surface expression. Interacts with host HCK, LYN, and SRC; these interactions activate the Src family kinases. Interacts with MAP3K5; this interaction inhibits the Fas and TNFR-mediated death signals. Interacts with beta-COP and PTE1. Interacts with human RACK1; this increases Nef phosphorylation by PKC. Interacts with TP53; this interaction decreases the half-life of TP53, protecting the infected cell against p53-mediated apoptosis. The virion-associated Nef proteins are cleaved by the viral protease to release the soluble C-terminal core protein. Nef is probably cleaved concomitantly with viral structural proteins on maturation of virus particles. Post-translationally, myristoylated. In terms of processing, phosphorylated on serine residues, probably by host PKCdelta and theta.

The protein resides in the host cell membrane. It is found in the virion. Its subcellular location is the secreted. The protein localises to the host Golgi apparatus membrane. Functionally, factor of infectivity and pathogenicity, required for optimal virus replication. Alters numerous pathways of T-lymphocyte function and down-regulates immunity surface molecules in order to evade host defense and increase viral infectivity. Alters the functionality of other immunity cells, like dendritic cells, monocytes/macrophages and NK cells. In terms of biological role, in infected CD4(+) T-lymphocytes, down-regulates the surface MHC-I, mature MHC-II, CD4, CD28, CCR5 and CXCR4 molecules. Mediates internalization and degradation of host CD4 through the interaction of with the cytoplasmic tail of CD4, the recruitment of AP-2 (clathrin adapter protein complex 2), internalization through clathrin coated pits, and subsequent transport to endosomes and lysosomes for degradation. Diverts host MHC-I molecules to the trans-Golgi network-associated endosomal compartments by an endocytic pathway to finally target them for degradation. MHC-I down-regulation may involve AP-1 (clathrin adapter protein complex 1) or possibly Src family kinase-ZAP70/Syk-PI3K cascade recruited by PACS2. In consequence infected cells are masked for immune recognition by cytotoxic T-lymphocytes. Decreasing the number of immune receptors also prevents reinfection by more HIV particles (superinfection). Down-regulates host SERINC3 and SERINC5 thereby excluding these proteins from the viral particles. Virion infectivity is drastically higher when SERINC3 or SERINC5 are excluded from the viral envelope, because these host antiviral proteins impair the membrane fusion event necessary for subsequent virion penetration. Its function is as follows. Bypasses host T-cell signaling by inducing a transcriptional program nearly identical to that of anti-CD3 cell activation. Interaction with TCR-zeta chain up-regulates the Fas ligand (FasL). Increasing surface FasL molecules and decreasing surface MHC-I molecules on infected CD4(+) cells send attacking cytotoxic CD8+ T-lymphocytes into apoptosis. Plays a role in optimizing the host cell environment for viral replication without causing cell death by apoptosis. Protects the infected cells from apoptosis in order to keep them alive until the next virus generation is ready to strike. Inhibits the Fas and TNFR-mediated death signals by blocking MAP3K5/ASK1. Decreases the half-life of TP53, protecting the infected cell against p53-mediated apoptosis. Inhibits the apoptotic signals regulated by the Bcl-2 family proteins through the formation of a Nef/PI3-kinase/PAK2 complex that leads to activation of PAK2 and induces phosphorylation of host BAD. Functionally, extracellular Nef protein targets CD4(+) T-lymphocytes for apoptosis by interacting with CXCR4 surface receptors. This is Protein Nef from Homo sapiens (Human).